Consider the following 301-residue polypeptide: MRIIFMGTPDFSVPVLDALVAAEHEVVAVYSQPPRPAGRGKRDRPSPVQARAETLGLTVRNPVSLKSTEEQSALADLNADVAVVVAYGLILPQAVLDAPARGCLNIHASLLPRWRGAAPIHRAIMAGDTMTGVCIMQMEAGLDTGPVLLRRETSIGAEDTTGTLHDRLSAIGAKAIVDALSQLDELTPKPQPDDGVTYATKIDKSEAKVDWTAPAPHINRQILGLSPFPGAWTMAGGKRLKLLQSRVANGTGALGEVLHGLTVACGDGAVEISRVQPEGKGAMDAKDWLLGARIAPGTVLE.

Residue 109 to 112 (SLLP) participates in (6S)-5,6,7,8-tetrahydrofolate binding.

Belongs to the Fmt family.

The enzyme catalyses L-methionyl-tRNA(fMet) + (6R)-10-formyltetrahydrofolate = N-formyl-L-methionyl-tRNA(fMet) + (6S)-5,6,7,8-tetrahydrofolate + H(+). In terms of biological role, attaches a formyl group to the free amino group of methionyl-tRNA(fMet). The formyl group appears to play a dual role in the initiator identity of N-formylmethionyl-tRNA by promoting its recognition by IF2 and preventing the misappropriation of this tRNA by the elongation apparatus. In Jannaschia sp. (strain CCS1), this protein is Methionyl-tRNA formyltransferase.